The primary structure comprises 89 residues: Small ribosomal subunit protein uS15 (89 aa).

This sequence belongs to the universal ribosomal protein uS15 family. Part of the 30S ribosomal subunit. Forms a bridge to the 50S subunit in the 70S ribosome, contacting the 23S rRNA.

One of the primary rRNA binding proteins, it binds directly to 16S rRNA where it helps nucleate assembly of the platform of the 30S subunit by binding and bridging several RNA helices of the 16S rRNA. In terms of biological role, forms an intersubunit bridge (bridge B4) with the 23S rRNA of the 50S subunit in the ribosome. This Caulobacter sp. (strain K31) protein is Small ribosomal subunit protein uS15.